The primary structure comprises 133 residues: Male-specific protein scotti (133 aa).

The interval 11–57 (FPSNGLGNNNNDPNQQRGERPRQPHPDLGWILDAPNEPPRNRNPLLY) is disordered. Residues 14–24 (NGLGNNNNDPN) are compositionally biased toward low complexity. Asparagine 83 carries an N-linked (GlcNAc...) asparagine glycan.

This sequence belongs to the male-specific scotti family.

Functionally, post-meiotically transcribed gene that has a role in late spermiogenesis; required for actin cone progression during spermatid individualization. The polypeptide is Male-specific protein scotti (Drosophila persimilis (Fruit fly)).